Here is a 95-residue protein sequence, read N- to C-terminus: Co-chaperonin GroES (95 aa).

This sequence belongs to the GroES chaperonin family. Heptamer of 7 subunits arranged in a ring. Interacts with the chaperonin GroEL.

It is found in the cytoplasm. In terms of biological role, together with the chaperonin GroEL, plays an essential role in assisting protein folding. The GroEL-GroES system forms a nano-cage that allows encapsulation of the non-native substrate proteins and provides a physical environment optimized to promote and accelerate protein folding. GroES binds to the apical surface of the GroEL ring, thereby capping the opening of the GroEL channel. This chain is Co-chaperonin GroES, found in Staphylococcus haemolyticus (strain JCSC1435).